The following is a 73-amino-acid chain: Translation initiation factor IF-1 (73 aa).

The S1-like domain occupies 1 to 73 (MANKEELIEF…SKGRITYRAR (73 aa)).

It belongs to the IF-1 family. In terms of assembly, component of the 30S ribosomal translation pre-initiation complex which assembles on the 30S ribosome in the order IF-2 and IF-3, IF-1 and N-formylmethionyl-tRNA(fMet); mRNA recruitment can occur at any time during PIC assembly.

The protein resides in the cytoplasm. One of the essential components for the initiation of protein synthesis. Stabilizes the binding of IF-2 and IF-3 on the 30S subunit to which N-formylmethionyl-tRNA(fMet) subsequently binds. Helps modulate mRNA selection, yielding the 30S pre-initiation complex (PIC). Upon addition of the 50S ribosomal subunit IF-1, IF-2 and IF-3 are released leaving the mature 70S translation initiation complex. The polypeptide is Translation initiation factor IF-1 (Acinetobacter baylyi (strain ATCC 33305 / BD413 / ADP1)).